A 136-amino-acid polypeptide reads, in one-letter code: Translation initiation factor 5A (136 aa).

Position 37 is a hypusine (Lys-37).

Belongs to the eIF-5A family.

The protein resides in the cytoplasm. Its function is as follows. Functions by promoting the formation of the first peptide bond. The polypeptide is Translation initiation factor 5A (eIF5A) (Thermococcus onnurineus (strain NA1)).